Reading from the N-terminus, the 505-residue chain is Cobyric acid synthase (505 aa).

A GATase cobBQ-type domain is found at 260 to 453 (RIAVAAIYFP…FHGIIDEPEV (194 aa)). Catalysis depends on Cys341, which acts as the Nucleophile. The active site involves His445.

The protein belongs to the CobB/CobQ family. CobQ subfamily.

It functions in the pathway cofactor biosynthesis; adenosylcobalamin biosynthesis. Catalyzes amidations at positions B, D, E, and G on adenosylcobyrinic A,C-diamide. NH(2) groups are provided by glutamine, and one molecule of ATP is hydrogenolyzed for each amidation. This is Cobyric acid synthase from Chlorobium phaeobacteroides (strain DSM 266 / SMG 266 / 2430).